The primary structure comprises 75 residues: Large ribosomal subunit protein bL31 (75 aa).

4 residues coordinate Zn(2+): Cys-16, Cys-18, Cys-38, and Cys-41.

The protein belongs to the bacterial ribosomal protein bL31 family. Type A subfamily. In terms of assembly, part of the 50S ribosomal subunit. Zn(2+) is required as a cofactor.

Binds the 23S rRNA. This chain is Large ribosomal subunit protein bL31, found in Nocardioides sp. (strain ATCC BAA-499 / JS614).